A 56-amino-acid chain; its full sequence is GSICLEPKVVGPCTAYFRRFYFDSETGKCTPFIYGGCEGNGNNFETLRACRAICRA.

In terms of domain architecture, BPTI/Kunitz inhibitor spans 4–54 (CLEPKVVGPCTAYFRRFYFDSETGKCTPFIYGGCEGNGNNFETLRACRAIC). 3 disulfide bridges follow: cysteine 4–cysteine 54, cysteine 13–cysteine 37, and cysteine 29–cysteine 50.

This sequence belongs to the venom Kunitz-type family. Sea anemone type 2 potassium channel toxin subfamily.

The protein resides in the secreted. It is found in the nematocyst. In terms of biological role, this protease inhibitor shows two different activities, it inhibits both the capsaicin receptor TRPV1 and serine proteases. It partially (max 50%) and reversibly inhibits mammalian TRPV1, a non-selective cation channel expressed by sensory neurons of the pain pathway). The second activity is a weak inhibition of trypsin and chymotrypsin activity (Ki=0.9 uM and Ki=4.5 uM, respectively). In vivo, shows analgesic effects on mammals. The polypeptide is TauPI-stichotoxin-Hcr2c (Radianthus crispa (Leathery sea anemone)).